Here is a 233-residue protein sequence, read N- to C-terminus: MPKHSKRYLEARKLVDRTKYYDLDEAIELVKKTATAKFDETIELHIQTGIDYRKPEQHIRGTIVLPHGTGKEVKVLVFAKGEKAKEALEAGADYVGAEDLVEKIEKEGFLDFDVAIATPDMMRIIGRLGKILGPRGLMPSPKSGTVTQEVAEAVKEFKKGRIEVRTDKTGNIHIPVGKRSFDNEKLKENIIAAIKQIMQMKPAGVKGQFIKKVVLASTMGPGIKLNLQSLLKE.

Belongs to the universal ribosomal protein uL1 family. In terms of assembly, part of the 50S ribosomal subunit.

Binds directly to 23S rRNA. The L1 stalk is quite mobile in the ribosome, and is involved in E site tRNA release. Its function is as follows. Protein L1 is also a translational repressor protein, it controls the translation of the L11 operon by binding to its mRNA. The polypeptide is Large ribosomal subunit protein uL1 (Thermotoga maritima (strain ATCC 43589 / DSM 3109 / JCM 10099 / NBRC 100826 / MSB8)).